Reading from the N-terminus, the 1189-residue chain is Lysine-specific demethylase hairless (1189 aa).

5 disordered regions span residues 1 to 40 (MESTPSFLKGTPTWEKTAPENGIVRQEPGSPPRDGLHHGP), 236 to 257 (HLQRAGEAERPSLHQRDGEMGA), 349 to 377 (EGGASGASEPSEEVNKASGPRACPPSHHT), 414 to 480 (AGSP…LQDP), and 505 to 552 (GEGG…RLST). Over residues 239–254 (RAGEAERPSLHQRDGE) the composition is skewed to basic and acidic residues. Residues 457–469 (KDVDSGQHDEQKG) are compositionally biased toward basic and acidic residues. Positions 566-570 (LCRLL) match the LXXLL motif 1 motif. Residues 600–625 (CSRCHHGLFNTHWRCPRCSHRLCVAC) form a C6-type zinc finger. A disordered region spans residues 702–750 (GDAGQQKESTQKTPPTPQPSCNGDTHRTKSIKEETPDSAETPAEDRAGR). Over residues 725–736 (DTHRTKSIKEET) the composition is skewed to basic and acidic residues. An LXXLL motif 2 motif is present at residues 758-762 (LCELL). The JmjC domain maps to 946–1157 (DTSRVENLAA…LSAQLCHQGP (212 aa)). Cysteine 1007, glutamate 1009, and histidine 1125 together coordinate Fe cation.

It depends on Fe(2+) as a cofactor. In terms of tissue distribution, strongest expression of isoforms 1 and 2 is seen in the small intestine, weaker expression in brain and colon, and trace expression is found in liver, pancreas, spleen, thymus, stomach, salivary gland, appendix and trachea. Isoform 1 is always the most abundant. Isoform 1 is exclusively expressed at low levels in kidney and testis. Isoform 2 is exclusively expressed at high levels in the skin.

The protein resides in the nucleus. It catalyses the reaction N(6),N(6)-dimethyl-L-lysyl(9)-[histone H3] + 2 2-oxoglutarate + 2 O2 = L-lysyl(9)-[histone H3] + 2 formaldehyde + 2 succinate + 2 CO2. In terms of biological role, histone demethylase that specifically demethylates both mono- and dimethylated 'Lys-9' of histone H3. May act as a transcription regulator controlling hair biology (via targeting of collagens), neural activity, and cell cycle. The polypeptide is Lysine-specific demethylase hairless (HR) (Homo sapiens (Human)).